Here is a 219-residue protein sequence, read N- to C-terminus: Ribose-5-phosphate isomerase A (219 aa).

Residues 28 to 31 (SGST), 81 to 84 (DGAD), and 94 to 97 (KGGG) contribute to the substrate site. Glu-103 acts as the Proton acceptor in catalysis. Residue Lys-121 coordinates substrate.

The protein belongs to the ribose 5-phosphate isomerase family. Homodimer.

The catalysed reaction is aldehydo-D-ribose 5-phosphate = D-ribulose 5-phosphate. The protein operates within carbohydrate degradation; pentose phosphate pathway; D-ribose 5-phosphate from D-ribulose 5-phosphate (non-oxidative stage): step 1/1. Functionally, catalyzes the reversible conversion of ribose-5-phosphate to ribulose 5-phosphate. The sequence is that of Ribose-5-phosphate isomerase A from Pasteurella multocida (strain Pm70).